The sequence spans 196 residues: Protease (196 aa).

Active-site residues include H54, D70, and C121.

Belongs to the peptidase C5 family. Interacts with protease cofactor pVI-C; this interaction is necessary for protease activation.

The protein localises to the virion. The protein resides in the host nucleus. It catalyses the reaction Cleaves proteins of the adenovirus and its host cell at two consensus sites: -Yaa-Xaa-Gly-Gly-|-Xaa- and -Yaa-Xaa-Gly-Xaa-|-Gly- (in which Yaa is Met, Ile or Leu, and Xaa is any amino acid).. Its activity is regulated as follows. Requires DNA and protease cofactor for maximal activation. Inside nascent virions, becomes partially activated by binding to the viral DNA, allowing it to cleave the cofactor that binds to the protease and fully activates it. Actin, like the viral protease cofactor, seems to act as a cofactor in the cleavage of cytokeratin 18 and of actin itself. In terms of biological role, cleaves viral precursor proteins (pTP, pIIIa, pVI, pVII, pVIII, and pX) inside newly assembled particles giving rise to mature virions. Protease complexed to its cofactor slides along the viral DNA to specifically locate and cleave the viral precursors. Mature virions have a weakened organization compared to the unmature virions, thereby facilitating subsequent uncoating. Without maturation, the particle lacks infectivity and is unable to uncoat. Late in adenovirus infection, in the cytoplasm, may participate in the cytoskeleton destruction. Cleaves host cell cytoskeletal keratins K7 and K18. This Bos taurus (Bovine) protein is Protease.